We begin with the raw amino-acid sequence, 383 residues long: Deoxyguanosinetriphosphate triphosphohydrolase-like protein (383 aa).

An HD domain is found at 62-198; sequence RLTHSLEVST…ASLADDISYI (137 aa).

This sequence belongs to the dGTPase family. Type 2 subfamily.

The protein is Deoxyguanosinetriphosphate triphosphohydrolase-like protein of Rickettsia prowazekii (strain Madrid E).